Here is a 145-residue protein sequence, read N- to C-terminus: Methyl-coenzyme M reductase I operon protein D (145 aa).

MCR is composed of three subunits: alpha, beta, and gamma. The function of proteins C and D is not known.

This is Methyl-coenzyme M reductase I operon protein D (mcrD) from Methanothermobacter marburgensis (strain ATCC BAA-927 / DSM 2133 / JCM 14651 / NBRC 100331 / OCM 82 / Marburg) (Methanobacterium thermoautotrophicum).